A 137-amino-acid polypeptide reads, in one-letter code: Putative protein YjhV (137 aa).

Residues 1 to 16 (MVGYHQTNQKTDTGKT) are compositionally biased toward polar residues. The segment at 1-20 (MVGYHQTNQKTDTGKTLTRR) is disordered.

The chain is Putative protein YjhV (yjhV) from Escherichia coli (strain K12).